Consider the following 312-residue polypeptide: Ribosomal RNA small subunit methyltransferase H (312 aa).

Residues 34-36 (GGH), Asp-54, Phe-78, Asp-100, and Gln-107 each bind S-adenosyl-L-methionine.

This sequence belongs to the methyltransferase superfamily. RsmH family.

The protein resides in the cytoplasm. The catalysed reaction is cytidine(1402) in 16S rRNA + S-adenosyl-L-methionine = N(4)-methylcytidine(1402) in 16S rRNA + S-adenosyl-L-homocysteine + H(+). Its function is as follows. Specifically methylates the N4 position of cytidine in position 1402 (C1402) of 16S rRNA. This chain is Ribosomal RNA small subunit methyltransferase H, found in Salmonella choleraesuis (strain SC-B67).